The following is a 235-amino-acid chain: Large ribosomal subunit protein uL3 (235 aa).

The tract at residues 138–157 (SVSHRSHGSTGGRQDPGKTF) is disordered. Glutamine 151 bears the N5-methylglutamine mark.

It belongs to the universal ribosomal protein uL3 family. Part of the 50S ribosomal subunit. Forms a cluster with proteins L14 and L19. In terms of processing, methylated by PrmB.

In terms of biological role, one of the primary rRNA binding proteins, it binds directly near the 3'-end of the 23S rRNA, where it nucleates assembly of the 50S subunit. This is Large ribosomal subunit protein uL3 from Rhodospirillum centenum (strain ATCC 51521 / SW).